Consider the following 181-residue polypeptide: Protein Abitram (181 aa).

The protein belongs to the ABITRAM family. In terms of assembly, interacts with F-actin. Interacts with G-actin.

It localises to the nucleus speckle. It is found in the cell projection. Its subcellular location is the lamellipodium. The protein resides in the nucleus. The protein localises to the growth cone. It localises to the dendrite. Functionally, actin-binding protein that regulates actin polymerization, filopodia dynamics and increases the branching of proximal dendrites of developing neurons. In Homo sapiens (Human), this protein is Protein Abitram.